Reading from the N-terminus, the 757-residue chain is RNA-directed RNA polymerase catalytic subunit (757 aa).

The segment at 52 to 78 (RGKWTTNTETGAPQLNPIDGPLPEDNE) is disordered. Positions 55–64 (WTTNTETGAP) are enriched in polar residues. 2 short sequence motifs (nuclear localization signal) span residues 187 to 195 (RKRRVRDNM) and 203 to 216 (RTIGKKKQKLNKRS). A promoter-binding site region spans residues 249–256 (RGFVYFVE). The region spanning 286 to 483 (VRKMMTNSQD…GINMSKKKSY (198 aa)) is the RdRp catalytic domain.

Belongs to the influenza viruses polymerase PB1 family. As to quaternary structure, influenza RNA polymerase is composed of three subunits: PB1, PB2 and PA. Interacts (via N-terminus) with PA (via C-terminus). Interacts (via C-terminus) with PB2 (via N-terminus); this interaction is essential for transcription initiation. Interacts (via C-terminus) with human PKP2 (via N-terminus); the interaction competitively inhibits the interaction between the RNA polymerase subunits PB1 and PB2. In terms of processing, phosphorylated by host PRKCA.

It localises to the host nucleus. Its subcellular location is the host cytoplasm. The enzyme catalyses RNA(n) + a ribonucleoside 5'-triphosphate = RNA(n+1) + diphosphate. In terms of biological role, RNA-dependent RNA polymerase which is responsible for replication and transcription of virus RNA segments. The transcription of viral mRNAs occurs by a unique mechanism called cap-snatching. 5' methylated caps of cellular mRNAs are cleaved after 10-13 nucleotides by PA. In turn, these short capped RNAs are used as primers by PB1 for transcription of viral mRNAs. During virus replication, PB1 initiates RNA synthesis and copy vRNA into complementary RNA (cRNA) which in turn serves as a template for the production of more vRNAs. The chain is RNA-directed RNA polymerase catalytic subunit from Influenza A virus (strain A/Swine/Tennessee/26/1977 H1N1).